A 904-amino-acid polypeptide reads, in one-letter code: Phosphoenolpyruvate carboxylase (904 aa).

Catalysis depends on residues H151 and K570.

It belongs to the PEPCase type 1 family. Requires Mg(2+) as cofactor.

The catalysed reaction is oxaloacetate + phosphate = phosphoenolpyruvate + hydrogencarbonate. Its function is as follows. Forms oxaloacetate, a four-carbon dicarboxylic acid source for the tricarboxylic acid cycle. The sequence is that of Phosphoenolpyruvate carboxylase from Xanthomonas campestris pv. campestris (strain ATCC 33913 / DSM 3586 / NCPPB 528 / LMG 568 / P 25).